The chain runs to 691 residues: Elongation factor G (691 aa).

Positions 8–282 constitute a tr-type G domain; it reads ERVRNIGIAA…AVIDYLPAPI (275 aa). GTP contacts are provided by residues 17-24, 81-85, and 135-138; these read AHIDAGKT, DTPGH, and NKMD.

The protein belongs to the TRAFAC class translation factor GTPase superfamily. Classic translation factor GTPase family. EF-G/EF-2 subfamily.

Its subcellular location is the cytoplasm. Functionally, catalyzes the GTP-dependent ribosomal translocation step during translation elongation. During this step, the ribosome changes from the pre-translocational (PRE) to the post-translocational (POST) state as the newly formed A-site-bound peptidyl-tRNA and P-site-bound deacylated tRNA move to the P and E sites, respectively. Catalyzes the coordinated movement of the two tRNA molecules, the mRNA and conformational changes in the ribosome. The chain is Elongation factor G from Prochlorococcus marinus (strain SARG / CCMP1375 / SS120).